A 154-amino-acid polypeptide reads, in one-letter code: 6,7-dimethyl-8-ribityllumazine synthase (154 aa).

5-amino-6-(D-ribitylamino)uracil-binding positions include Phe23, 57–59 (AYE), and 81–83 (AVI). 86–87 (GT) serves as a coordination point for (2S)-2-hydroxy-3-oxobutyl phosphate. His89 acts as the Proton donor in catalysis. Residue Phe114 participates in 5-amino-6-(D-ribitylamino)uracil binding. Arg128 is a (2S)-2-hydroxy-3-oxobutyl phosphate binding site.

Belongs to the DMRL synthase family. As to quaternary structure, forms an icosahedral capsid composed of 60 subunits, arranged as a dodecamer of pentamers.

It catalyses the reaction (2S)-2-hydroxy-3-oxobutyl phosphate + 5-amino-6-(D-ribitylamino)uracil = 6,7-dimethyl-8-(1-D-ribityl)lumazine + phosphate + 2 H2O + H(+). It participates in cofactor biosynthesis; riboflavin biosynthesis; riboflavin from 2-hydroxy-3-oxobutyl phosphate and 5-amino-6-(D-ribitylamino)uracil: step 1/2. Its function is as follows. Catalyzes the formation of 6,7-dimethyl-8-ribityllumazine by condensation of 5-amino-6-(D-ribitylamino)uracil with 3,4-dihydroxy-2-butanone 4-phosphate. This is the penultimate step in the biosynthesis of riboflavin. The sequence is that of 6,7-dimethyl-8-ribityllumazine synthase from Acidithiobacillus ferrooxidans (strain ATCC 23270 / DSM 14882 / CIP 104768 / NCIMB 8455) (Ferrobacillus ferrooxidans (strain ATCC 23270)).